Reading from the N-terminus, the 201-residue chain is 3-isopropylmalate dehydratase small subunit (201 aa).

This sequence belongs to the LeuD family. LeuD type 1 subfamily. As to quaternary structure, heterodimer of LeuC and LeuD.

The enzyme catalyses (2R,3S)-3-isopropylmalate = (2S)-2-isopropylmalate. The protein operates within amino-acid biosynthesis; L-leucine biosynthesis; L-leucine from 3-methyl-2-oxobutanoate: step 2/4. Functionally, catalyzes the isomerization between 2-isopropylmalate and 3-isopropylmalate, via the formation of 2-isopropylmaleate. The chain is 3-isopropylmalate dehydratase small subunit from Cronobacter sakazakii (strain ATCC BAA-894) (Enterobacter sakazakii).